The primary structure comprises 324 residues: Acetyl-coenzyme A carboxylase carboxyl transferase subunit alpha (324 aa).

The 255-residue stretch at 44 to 298 (ILQRKLLNLK…KNKIRDQLDF (255 aa)) folds into the CoA carboxyltransferase C-terminal domain.

Belongs to the AccA family. In terms of assembly, acetyl-CoA carboxylase is a heterohexamer composed of biotin carboxyl carrier protein (accB), biotin carboxylase (accC) and two subunits each of ACCase subunit alpha (accA) and ACCase subunit beta (accD).

Its subcellular location is the plastid. The protein localises to the chloroplast. The enzyme catalyses N(6)-carboxybiotinyl-L-lysyl-[protein] + acetyl-CoA = N(6)-biotinyl-L-lysyl-[protein] + malonyl-CoA. The protein operates within lipid metabolism; malonyl-CoA biosynthesis; malonyl-CoA from acetyl-CoA: step 1/1. Its function is as follows. Component of the acetyl coenzyme A carboxylase (ACC) complex. First, biotin carboxylase catalyzes the carboxylation of biotin on its carrier protein (BCCP) and then the CO(2) group is transferred by the carboxyltransferase to acetyl-CoA to form malonyl-CoA. The polypeptide is Acetyl-coenzyme A carboxylase carboxyl transferase subunit alpha (Cyanidium caldarium (Red alga)).